The following is a 22-amino-acid chain: Caerin-3.3 (22 aa).

The residue at position 22 (K22) is a Lysine amide.

As to expression, expressed by the skin parotoid and/or rostral glands.

The protein resides in the secreted. Its function is as follows. Antibacterial peptide, that adopts an alpha helical conformation which can disrupt bacterial membranes. Each caerin displays a different antimicrobial specificity. The polypeptide is Caerin-3.3 (Ranoidea caerulea (Green tree frog)).